Here is a 509-residue protein sequence, read N- to C-terminus: Glycogen synthase 2 (509 aa).

Lys15 lines the ADP-alpha-D-glucose pocket.

The protein belongs to the glycosyltransferase 1 family. Bacterial/plant glycogen synthase subfamily.

The enzyme catalyses [(1-&gt;4)-alpha-D-glucosyl](n) + ADP-alpha-D-glucose = [(1-&gt;4)-alpha-D-glucosyl](n+1) + ADP + H(+). It participates in glycan biosynthesis; glycogen biosynthesis. Its function is as follows. Synthesizes alpha-1,4-glucan chains using ADP-glucose. This is Glycogen synthase 2 (glgA2) from Agrobacterium fabrum (strain C58 / ATCC 33970) (Agrobacterium tumefaciens (strain C58)).